Reading from the N-terminus, the 377-residue chain is Tryptophan 2,3-dioxygenase (377 aa).

Residues 57-61 and Arg-128 each bind substrate; that span reads FIITH. A heme-binding site is contributed by His-313. Thr-328 contacts substrate.

Belongs to the tryptophan 2,3-dioxygenase family. In terms of assembly, homotetramer. Dimer of dimers. It depends on heme as a cofactor.

The enzyme catalyses L-tryptophan + O2 = N-formyl-L-kynurenine. It participates in amino-acid degradation; L-tryptophan degradation via kynurenine pathway; L-kynurenine from L-tryptophan: step 1/2. The protein operates within pigment biosynthesis; ommochrome biosynthesis. Functionally, heme-dependent dioxygenase that catalyzes the oxidative cleavage of the L-tryptophan (L-Trp) pyrrole ring and converts L-tryptophan to N-formyl-L-kynurenine. Catalyzes the oxidative cleavage of the indole moiety. The protein is Tryptophan 2,3-dioxygenase of Drosophila grimshawi (Hawaiian fruit fly).